Here is a 202-residue protein sequence, read N- to C-terminus: Large ribosomal subunit protein uL18 (202 aa).

This sequence belongs to the universal ribosomal protein uL18 family. In terms of assembly, part of the 50S ribosomal subunit. Contacts the 5S and 23S rRNAs.

In terms of biological role, this is one of the proteins that bind and probably mediate the attachment of the 5S RNA into the large ribosomal subunit, where it forms part of the central protuberance. In Staphylothermus marinus (strain ATCC 43588 / DSM 3639 / JCM 9404 / F1), this protein is Large ribosomal subunit protein uL18.